The following is a 550-amino-acid chain: MKKFITSALPYVNNQPHLGNIIGSVLSGDVYSRYCKKKGEVSVYICGTDEYGTAIEMEAISQGVTPLEICEKNRKLHKQVYDWFNIDFDYFGFTSSATHTGLVQDLFMKMYDNGHFSEVEIEQFYCEHCGLFLADRFIVGECKFCGDGRARGDQCDSCGHTYNSLELLSPRCSICSSSPVVRATTHLFFDLEAFRPSLEELYRTNGHLWSQNAQNIFRQWISMEFYPRCMTRDLKFNWGVPVPLEKFKEKVFYVWFDAPIGYLTFLKELVGEDFGEWCKDAELVQFMGKDNVAFHTVIFPAMLYATGEKYPVVRRLSATEYLQFENEKFSKSRRHGIFGLDLVGGGLGKSCMWRYYLLKIRPESTKDSNFTFSDFRQSVTADLINNLGNFVNRVLKYIQSKCNSRVSLLELDSGDKKCIEDVNELYCKYKAKMEEIKLREALQVVMEICRRGNEYIQEGVRSRDRKGHFFCLGFSIIGLVGTLLHPFIPVTSLEILRMCNLEETMFPESMRIVDGHTMGSDIRPLFEDFTTEQIEEMKRYDRPQSTGCSK.

The 'HIGH' region signature appears at 10-20; that stretch reads PYVNNQPHLGN. The 'KMSKS' region signature appears at 328 to 332; that stretch reads KFSKS. Position 331 (Lys-331) interacts with ATP.

This sequence belongs to the class-I aminoacyl-tRNA synthetase family.

It localises to the cytoplasm. It carries out the reaction tRNA(Met) + L-methionine + ATP = L-methionyl-tRNA(Met) + AMP + diphosphate. In Encephalitozoon cuniculi (strain GB-M1) (Microsporidian parasite), this protein is Probable methionine--tRNA ligase, cytoplasmic.